Consider the following 468-residue polypeptide: 3-isopropylmalate dehydratase large subunit (468 aa).

Cysteine 349, cysteine 409, and cysteine 412 together coordinate [4Fe-4S] cluster.

The protein belongs to the aconitase/IPM isomerase family. LeuC type 1 subfamily. In terms of assembly, heterodimer of LeuC and LeuD. It depends on [4Fe-4S] cluster as a cofactor.

It catalyses the reaction (2R,3S)-3-isopropylmalate = (2S)-2-isopropylmalate. It functions in the pathway amino-acid biosynthesis; L-leucine biosynthesis; L-leucine from 3-methyl-2-oxobutanoate: step 2/4. In terms of biological role, catalyzes the isomerization between 2-isopropylmalate and 3-isopropylmalate, via the formation of 2-isopropylmaleate. In Shewanella baltica (strain OS185), this protein is 3-isopropylmalate dehydratase large subunit.